Consider the following 180-residue polypeptide: Protein SPMIP9 (180 aa).

In terms of assembly, microtubule inner protein component of sperm flagellar doublet microtubules. Only detected after the mouse is 35 days old. Expression increases gradually from day 35 to 6 months, and remains stable after 54 days. Exclusively expressed in the epididymis and testis.

Its subcellular location is the nucleus. It is found in the cytoplasm. The protein resides in the cytoskeleton. It localises to the flagellum axoneme. Microtubule inner protein (MIP) part of the dynein-decorated doublet microtubules (DMTs) in flagella axoneme. This Mus musculus (Mouse) protein is Protein SPMIP9 (Spmip9).